A 78-amino-acid chain; its full sequence is Longicornsin (78 aa).

An N-terminal signal peptide occupies residues 1-22 (MAESTTTCFLLLVTGYVTAVMS). The propeptide occupies 23 to 29 (EEAHLRS). 3 disulfides stabilise this stretch: C35–C58, C43–C63, and C47–C65.

Salivary glands (at protein level).

The protein resides in the secreted. Its function is as follows. Has antibacterial activity against the Gram-positive bacteria S.aureus ATCC2592 (MIC=0.8 ug/ml), S.aureus 6A (MIC=0.8 ug/ml) and S.aureus 15A (MIC=1.6 ug/ml), and against the Gram-negative bacteria E.coli ATCC 25922 (MIC=3.2 ug/ml), E.coli 23A (MIC=6.4 ug/ml), E.coli 27A (MIC=6.4 ug/ml), P.aeruginosa 3A (MIC=3.2 ug/ml), P.aeruginosa 7A (MIC=0.8 ug/ml) and H.pylori NCTC11637 (MIC=6.4 ug/ml). Has antifungal activity against C.albidus ATCC2002 (MIC=25.6 ug/ml). Very low hemolytic activity against rabbit erythrocytes. The sequence is that of Longicornsin from Haemaphysalis longicornis (Bush tick).